Reading from the N-terminus, the 257-residue chain is Histidine/lysine/arginine/ornithine transport ATP-binding protein HisP (257 aa).

An ABC transporter domain is found at 6 to 252 (LNVIDLHKRY…PQSPRLQRFL (247 aa)). The ATP site is built by S40, G41, G43, K44, S45, and T46.

This sequence belongs to the ABC transporter superfamily. As to quaternary structure, the HisPMQJ complex is composed of two ATP-binding proteins (HisP), two transmembrane proteins (HisM and HisQ) and a solute-binding protein (HisJ). The HisPMQ-ArgT complex is composed of two ATP-binding proteins (HisP), two transmembrane proteins (HisM and HisQ) and a solute-binding protein (ArgT).

Its subcellular location is the cell inner membrane. The enzyme catalyses a polar amino acid(out) + ATP + H2O = a polar amino acid(in) + ADP + phosphate + H(+). It carries out the reaction L-histidine(out) + ATP + H2O = L-histidine(in) + ADP + phosphate + H(+). The catalysed reaction is L-lysine(out) + ATP + H2O = L-lysine(in) + ADP + phosphate + H(+). It catalyses the reaction L-arginine(out) + ATP + H2O = L-arginine(in) + ADP + phosphate + H(+). The enzyme catalyses L-ornithine(out) + ATP + H2O = L-ornithine(in) + ADP + phosphate + H(+). Part of the ABC transporter complex HisPMQJ involved in histidine transport. Is also part of the ABC transporter complex HisPMQ-ArgT involved in lysine/arginine/ornithine transport. Shows ATPase activity. Responsible for energy coupling to the transport system. The sequence is that of Histidine/lysine/arginine/ornithine transport ATP-binding protein HisP from Escherichia coli (strain K12).